Here is a 936-residue protein sequence, read N- to C-terminus: Periplasmic nitrate reductase (936 aa).

The segment at residues 1 to 31 (MALSRRDFLKSSAAAAAASAVGLSVPKEVEA) is a signal peptide (tat-type signal). Residues 40–96 (WRWDKAVCRFCGTGCGIMIATKDDRIVAVKGDPLAPVNRGLNCIKGYFTAKIMYGAD) enclose the 4Fe-4S Mo/W bis-MGD-type domain. The [4Fe-4S] cluster site is built by Cys-47, Cys-50, Cys-54, and Cys-82. Residues Lys-84, Gln-152, Asn-177, Cys-181, 214-221 (WGSNMAEM), 246-250 (STYTH), Met-424, Gln-428, Asn-534, 559-560 (SD), Lys-582, Asp-609, and 826-835 (TGRVLEHWHS) each bind Mo-bis(molybdopterin guanine dinucleotide). Residue Trp-902 coordinates substrate. Mo-bis(molybdopterin guanine dinucleotide) contacts are provided by Asn-910 and Lys-927.

This sequence belongs to the prokaryotic molybdopterin-containing oxidoreductase family. NasA/NapA/NarB subfamily. Component of the periplasmic nitrate reductase NapAB complex composed of NapA and NapB. The cofactor is [4Fe-4S] cluster. It depends on Mo-bis(molybdopterin guanine dinucleotide) as a cofactor. Predicted to be exported by the Tat system. The position of the signal peptide cleavage has not been experimentally proven.

The protein resides in the periplasm. It catalyses the reaction 2 Fe(II)-[cytochrome] + nitrate + 2 H(+) = 2 Fe(III)-[cytochrome] + nitrite + H2O. In terms of biological role, catalytic subunit of the periplasmic nitrate reductase complex NapAB. Receives electrons from NapB and catalyzes the reduction of nitrate to nitrite. The protein is Periplasmic nitrate reductase of Nitratiruptor sp. (strain SB155-2).